Here is a 726-residue protein sequence, read N- to C-terminus: Catalase-peroxidase (726 aa).

A cross-link (tryptophyl-tyrosyl-methioninium (Trp-Tyr) (with M-240)) is located at residues 91–214; the sequence is WHSAGTYRIA…LGAVQMGLIY (124 aa). H92 serves as the catalytic Proton acceptor. The tryptophyl-tyrosyl-methioninium (Tyr-Met) (with W-91) cross-link spans 214–240; sequence YVNPEGPNGNPDPLAAARDIRETFARM. H255 contacts heme b. Positions 335 to 362 are disordered; that stretch reads AHQWRPKAGAGADSVPDPHDPNKRRTPS.

It belongs to the peroxidase family. Peroxidase/catalase subfamily. In terms of assembly, homodimer or homotetramer. The cofactor is heme b. In terms of processing, formation of the three residue Trp-Tyr-Met cross-link is important for the catalase, but not the peroxidase activity of the enzyme.

It carries out the reaction H2O2 + AH2 = A + 2 H2O. It catalyses the reaction 2 H2O2 = O2 + 2 H2O. Functionally, bifunctional enzyme with both catalase and broad-spectrum peroxidase activity. The polypeptide is Catalase-peroxidase (Pseudomonas fluorescens (strain ATCC BAA-477 / NRRL B-23932 / Pf-5)).